We begin with the raw amino-acid sequence, 160 residues long: Transcription elongation factor GreA (160 aa).

A coiled-coil region spans residues Q4–H70.

It belongs to the GreA/GreB family.

Necessary for efficient RNA polymerase transcription elongation past template-encoded arresting sites. The arresting sites in DNA have the property of trapping a certain fraction of elongating RNA polymerases that pass through, resulting in locked ternary complexes. Cleavage of the nascent transcript by cleavage factors such as GreA or GreB allows the resumption of elongation from the new 3'terminus. GreA releases sequences of 2 to 3 nucleotides. In Staphylococcus carnosus (strain TM300), this protein is Transcription elongation factor GreA.